A 212-amino-acid polypeptide reads, in one-letter code: Thymidylate kinase (212 aa).

10-17 (GPDGAGKT) serves as a coordination point for ATP.

It belongs to the thymidylate kinase family.

The catalysed reaction is dTMP + ATP = dTDP + ADP. Functionally, phosphorylation of dTMP to form dTDP in both de novo and salvage pathways of dTTP synthesis. The sequence is that of Thymidylate kinase from Lactobacillus delbrueckii subsp. bulgaricus (strain ATCC 11842 / DSM 20081 / BCRC 10696 / JCM 1002 / NBRC 13953 / NCIMB 11778 / NCTC 12712 / WDCM 00102 / Lb 14).